The following is a 172-amino-acid chain: 3-phenylpropionate/cinnamic acid dioxygenase subunit beta (172 aa).

This sequence belongs to the bacterial ring-hydroxylating dioxygenase beta subunit family. This dioxygenase system consists of four proteins: the two subunits of the hydroxylase component (HcaE and HcaF), a ferredoxin (HcaC) and a ferredoxin reductase (HcaD).

The enzyme catalyses 3-phenylpropanoate + NADH + O2 + H(+) = 3-(cis-5,6-dihydroxycyclohexa-1,3-dien-1-yl)propanoate + NAD(+). It carries out the reaction (E)-cinnamate + NADH + O2 + H(+) = (2E)-3-(cis-5,6-dihydroxycyclohexa-1,3-dien-1-yl)prop-2-enoate + NAD(+). It participates in aromatic compound metabolism; 3-phenylpropanoate degradation. Part of the multicomponent 3-phenylpropionate dioxygenase. Converts 3-phenylpropionic acid (PP) and cinnamic acid (CI) into 3-phenylpropionate-dihydrodiol (PP-dihydrodiol) and cinnamic acid-dihydrodiol (CI-dihydrodiol), respectively. This chain is 3-phenylpropionate/cinnamic acid dioxygenase subunit beta, found in Escherichia coli O7:K1 (strain IAI39 / ExPEC).